The sequence spans 188 residues: ATP synthase subunit b 1 (188 aa).

Residues 35 to 55 (VHFSSHFFWLAISFGFFYLFI) traverse the membrane as a helical segment.

The protein belongs to the ATPase B chain family. F-type ATPases have 2 components, F(1) - the catalytic core - and F(0) - the membrane proton channel. F(1) has five subunits: alpha(3), beta(3), gamma(1), delta(1), epsilon(1). F(0) has three main subunits: a(1), b(2) and c(10-14). The alpha and beta chains form an alternating ring which encloses part of the gamma chain. F(1) is attached to F(0) by a central stalk formed by the gamma and epsilon chains, while a peripheral stalk is formed by the delta and b chains.

The protein resides in the cell inner membrane. Functionally, f(1)F(0) ATP synthase produces ATP from ADP in the presence of a proton or sodium gradient. F-type ATPases consist of two structural domains, F(1) containing the extramembraneous catalytic core and F(0) containing the membrane proton channel, linked together by a central stalk and a peripheral stalk. During catalysis, ATP synthesis in the catalytic domain of F(1) is coupled via a rotary mechanism of the central stalk subunits to proton translocation. In terms of biological role, component of the F(0) channel, it forms part of the peripheral stalk, linking F(1) to F(0). In Bartonella tribocorum (strain CIP 105476 / IBS 506), this protein is ATP synthase subunit b 1.